The sequence spans 167 residues: Crossover junction endodeoxyribonuclease RuvC (167 aa).

Catalysis depends on residues Asp11, Glu71, and Asp143. Mg(2+)-binding residues include Asp11, Glu71, and Asp143.

This sequence belongs to the RuvC family. Homodimer which binds Holliday junction (HJ) DNA. The HJ becomes 2-fold symmetrical on binding to RuvC with unstacked arms; it has a different conformation from HJ DNA in complex with RuvA. In the full resolvosome a probable DNA-RuvA(4)-RuvB(12)-RuvC(2) complex forms which resolves the HJ. Mg(2+) is required as a cofactor.

It is found in the cytoplasm. The catalysed reaction is Endonucleolytic cleavage at a junction such as a reciprocal single-stranded crossover between two homologous DNA duplexes (Holliday junction).. Its function is as follows. The RuvA-RuvB-RuvC complex processes Holliday junction (HJ) DNA during genetic recombination and DNA repair. Endonuclease that resolves HJ intermediates. Cleaves cruciform DNA by making single-stranded nicks across the HJ at symmetrical positions within the homologous arms, yielding a 5'-phosphate and a 3'-hydroxyl group; requires a central core of homology in the junction. The consensus cleavage sequence is 5'-(A/T)TT(C/G)-3'. Cleavage occurs on the 3'-side of the TT dinucleotide at the point of strand exchange. HJ branch migration catalyzed by RuvA-RuvB allows RuvC to scan DNA until it finds its consensus sequence, where it cleaves and resolves the cruciform DNA. In Bartonella bacilliformis (strain ATCC 35685 / KC583 / Herrer 020/F12,63), this protein is Crossover junction endodeoxyribonuclease RuvC.